Reading from the N-terminus, the 461-residue chain is Probable tubulin polyglutamylase TTLL9 (461 aa).

Positions 1–21 are disordered; that stretch reads MSRPKNQNYKGHGLQKGKERE. Positions 22-402 constitute a TTL domain; it reads QRASIRFKTT…EARLTGREKR (381 aa). ATP contacts are provided by residues K149 and 155–156; that span reads QG. Q155 is an a protein binding site. The interval 182 to 208 is disordered; sequence SLEAQPARNTVNPSGSHDTRSSDDQKD. Residues 188–197 are compositionally biased toward polar residues; sequence ARNTVNPSGS. Positions 198–208 are enriched in basic and acidic residues; it reads HDTRSSDDQKD. ATP-binding positions include 218 to 221 and 231 to 233; these read QRYI and KFD. An L-glutamate-binding site is contributed by R257. 276–277 lines the ATP pocket; sequence TN. Position 294 (K294) interacts with L-glutamate. Mg(2+) is bound by residues D348, E361, and N363. Residue K379 coordinates L-glutamate.

It belongs to the tubulin--tyrosine ligase family. The cofactor is Mg(2+).

The protein resides in the cytoplasm. It localises to the cytoskeleton. Its subcellular location is the cilium basal body. The protein localises to the flagellum axoneme. The enzyme catalyses (L-glutamyl)(n)-gamma-L-glutamyl-L-glutamyl-[protein] + L-glutamate + ATP = (L-glutamyl)(n+1)-gamma-L-glutamyl-L-glutamyl-[protein] + ADP + phosphate + H(+). Functionally, probable tubulin polyglutamylase that generates side chains of glutamate on the gamma-carboxyl group of specific glutamate residues within the C-terminal tail of target proteins. Similar to TTLL1, may acquire enzymatic activity only in complex with other proteins as it is most likely lacking domains important for autonomous activity. Mediates tubulin polyglutamylation which induces establishment of microtubule heterogeneity in sperm flagella, thereby playing a role in normal motile flagella axoneme structure and sperm flagella beating pattern. This chain is Probable tubulin polyglutamylase TTLL9 (TTLL9), found in Bos taurus (Bovine).